A 98-amino-acid chain; its full sequence is C-C motif chemokine 19 (98 aa).

Residues 1–21 form the signal peptide; the sequence is MALLLALSLLVLWTSPAPTLS. Intrachain disulfides connect Cys29/Cys55 and Cys30/Cys71.

Belongs to the intercrine beta (chemokine CC) family. As to quaternary structure, interacts with TNFAIP6 (via Link domain). In terms of tissue distribution, expressed at high levels in the lymph nodes, thymus and appendix. Intermediate levels seen in colon and trachea, while low levels found in spleen, small intestine, lung, kidney and stomach.

It is found in the secreted. In terms of biological role, may play a role not only in inflammatory and immunological responses but also in normal lymphocyte recirculation and homing. May play an important role in trafficking of T-cells in thymus, and T-cell and B-cell migration to secondary lymphoid organs. Binds to chemokine receptor CCR7. Recombinant CCL19 shows potent chemotactic activity for T-cells and B-cells but not for granulocytes and monocytes. Binds to atypical chemokine receptor ACKR4 and mediates the recruitment of beta-arrestin (ARRB1/2) to ACKR4. The polypeptide is C-C motif chemokine 19 (CCL19) (Homo sapiens (Human)).